Consider the following 122-residue polypeptide: Large ribosomal subunit protein uL14 (122 aa).

Belongs to the universal ribosomal protein uL14 family. As to quaternary structure, part of the 50S ribosomal subunit. Forms a cluster with proteins L3 and L19. In the 70S ribosome, L14 and L19 interact and together make contacts with the 16S rRNA in bridges B5 and B8.

Its function is as follows. Binds to 23S rRNA. Forms part of two intersubunit bridges in the 70S ribosome. This Jannaschia sp. (strain CCS1) protein is Large ribosomal subunit protein uL14.